The primary structure comprises 437 residues: Elongation factor 1-gamma (437 aa).

An N-acetylalanine modification is found at alanine 2. A GST N-terminal domain is found at 2–87 (AAGTLYTYPE…YVSNEELRGS (86 aa)). Positions 88-216 (TPEAAAQVVQ…VKLCEKMAQF (129 aa)) constitute a GST C-terminal domain. Lysine 147 and lysine 212 each carry N6-acetyllysine. The segment covering 221–254 (FAESQPKKDTPRKEKGSREEKQKPQAERKEEKKA) has biased composition (basic and acidic residues). The tract at residues 221–268 (FAESQPKKDTPRKEKGSREEKQKPQAERKEEKKAAAPAPEEEMDECEQ) is disordered. Lysine 253 participates in a covalent cross-link: Glycyl lysine isopeptide (Lys-Gly) (interchain with G-Cter in SUMO1). Residues 276–437 (AKDPFAHLPK…KAVNQGKIFK (162 aa)) form the EF-1-gamma C-terminal domain. A Glycyl lysine isopeptide (Lys-Gly) (interchain with G-Cter in SUMO2) cross-link involves residue lysine 285. Lysine 401 bears the N6-acetyllysine mark. Lysine 434 carries the N6-acetyllysine; alternate modification. Lysine 434 carries the N6-malonyllysine; alternate modification.

EF-1 is composed of four subunits: alpha, beta, delta, and gamma.

In terms of biological role, probably plays a role in anchoring the complex to other cellular components. This Mus musculus (Mouse) protein is Elongation factor 1-gamma (Eef1g).